The chain runs to 290 residues: MRLLVISGRSGSGKTSALHLLEDEGFTCIDNLPVKLLPALIEQIGDAPHASKHKFAIGIDARNLNSDLSQIESLIKDNLPANAECLVVYLDTSREVLLKRFSETRRKHPLSDQNTGLNEAIAKEKVILEPVAAAADITVDTSHMSLHELRSTIKRLVVGEESKGMAIMFKSFGFKYGVPVDADFIFDVRCLPNPYWSPELRSQSGLEAGVIEFLNSQQEVDDMFDDICAFVQKWAPSFQANNRSYLTVAIGCTGGMHRSVYLAERLAAELKKGYANVQTRHRQLEQKPGA.

Position 8–15 (8–15 (GRSGSGKT)) interacts with ATP. 60–63 (DARN) is a binding site for GTP.

Belongs to the RapZ-like family.

Its function is as follows. Displays ATPase and GTPase activities. This chain is Nucleotide-binding protein Sde_3181, found in Saccharophagus degradans (strain 2-40 / ATCC 43961 / DSM 17024).